The sequence spans 298 residues: Mitochondrial glycine transporter (298 aa).

3 Solcar repeats span residues Thr5–Ala84, Leu105–Val189, and Thr211–Leu295. 6 helical membrane passes run Leu11–Gln36, Gly59–Ile85, Leu111–Glu136, Gly164–Lys187, Val215–Met241, and Gly270–Ile288.

The protein belongs to the mitochondrial carrier (TC 2.A.29) family. SLC25A38 subfamily.

The protein resides in the mitochondrion inner membrane. It catalyses the reaction glycine(in) = glycine(out). Mitochondrial glycine transporter that imports glycine into the mitochondrial matrix. Plays an important role in providing glycine for the first enzymatic step in heme biosynthesis, the condensation of glycine with succinyl-CoA to produce 5-aminolevulinate (ALA) in the mitochondrial matrix. The sequence is that of Mitochondrial glycine transporter from Vanderwaltozyma polyspora (strain ATCC 22028 / DSM 70294 / BCRC 21397 / CBS 2163 / NBRC 10782 / NRRL Y-8283 / UCD 57-17) (Kluyveromyces polysporus).